Here is a 429-residue protein sequence, read N- to C-terminus: Keratin, type I cytoskeletal 47 kDa (429 aa).

Residues 1-16 (MTSYRSSSASYYSGSS) are compositionally biased toward low complexity. A disordered region spans residues 1–20 (MTSYRSSSASYYSGSSSKGG). The interval 1–69 (MTSYRSSSAS…EAASSSFGGN (69 aa)) is head. Residues 70–105 (EKHAMQNLNDRLASYLEKVRALEATNSDLEGKIRNW) form a coil 1A region. The IF rod domain occupies 70–385 (EKHAMQNLND…RLLEGELGQV (316 aa)). The tract at residues 106-127 (YDKQSDAGIGAGSKDYSKYFEI) is linker 1. Residues 128–219 (IAELRNKIRA…KNHEEEMSHA (92 aa)) form a coil 1B region. The tract at residues 220 to 242 (KSQSAGKVSVEMDAALGVDLTSI) is linker 12. Residues 243 to 381 (LNNMRADYEI…QTYRRLLEGE (139 aa)) form a coil 2 region. The tract at residues 382-429 (LGQVTTVANTSSVESKTESSSTSTTRTRMVKTIVEEVVDGKVVSSRVE) is tail. The interval 389 to 408 (ANTSSVESKTESSSTSTTRT) is disordered. Low complexity predominate over residues 391 to 408 (TSSVESKTESSSTSTTRT).

This sequence belongs to the intermediate filament family. In terms of assembly, heterotetramer of two type I and two type II keratins.

This is Keratin, type I cytoskeletal 47 kDa (xk81a1) from Xenopus laevis (African clawed frog).